Here is a 509-residue protein sequence, read N- to C-terminus: UDP-N-acetylmuramoyl-L-alanyl-D-glutamate--2,6-diaminopimelate ligase (509 aa).

Ser-32 is a UDP-N-acetyl-alpha-D-muramoyl-L-alanyl-D-glutamate binding site. 117-123 contributes to the ATP binding site; the sequence is GTNGKTT. UDP-N-acetyl-alpha-D-muramoyl-L-alanyl-D-glutamate-binding positions include 159–160, Ser-186, Gln-192, and Arg-194; that span reads TT. Lys-226 carries the N6-carboxylysine modification. Meso-2,6-diaminopimelate-binding positions include Arg-401, 425–428, Gly-476, and Glu-480; that span reads DNPR. The Meso-diaminopimelate recognition motif motif lies at 425–428; that stretch reads DNPR.

It belongs to the MurCDEF family. MurE subfamily. Mg(2+) is required as a cofactor. Post-translationally, carboxylation is probably crucial for Mg(2+) binding and, consequently, for the gamma-phosphate positioning of ATP.

It localises to the cytoplasm. It carries out the reaction UDP-N-acetyl-alpha-D-muramoyl-L-alanyl-D-glutamate + meso-2,6-diaminopimelate + ATP = UDP-N-acetyl-alpha-D-muramoyl-L-alanyl-gamma-D-glutamyl-meso-2,6-diaminopimelate + ADP + phosphate + H(+). It participates in cell wall biogenesis; peptidoglycan biosynthesis. Functionally, catalyzes the addition of meso-diaminopimelic acid to the nucleotide precursor UDP-N-acetylmuramoyl-L-alanyl-D-glutamate (UMAG) in the biosynthesis of bacterial cell-wall peptidoglycan. This is UDP-N-acetylmuramoyl-L-alanyl-D-glutamate--2,6-diaminopimelate ligase from Prochlorococcus marinus (strain NATL1A).